A 299-amino-acid chain; its full sequence is Ribosomal protein L11 methyltransferase (299 aa).

S-adenosyl-L-methionine contacts are provided by Thr139, Gly163, Asp185, and Asn232.

It belongs to the methyltransferase superfamily. PrmA family.

It is found in the cytoplasm. The catalysed reaction is L-lysyl-[protein] + 3 S-adenosyl-L-methionine = N(6),N(6),N(6)-trimethyl-L-lysyl-[protein] + 3 S-adenosyl-L-homocysteine + 3 H(+). Methylates ribosomal protein L11. This Crocosphaera subtropica (strain ATCC 51142 / BH68) (Cyanothece sp. (strain ATCC 51142)) protein is Ribosomal protein L11 methyltransferase.